The chain runs to 568 residues: Phosphoprotein (568 aa).

The interval 1–23 (MDQDALISKEDSEVEREASGGRE) is disordered. Residues 7–20 (ISKEDSEVEREASG) are compositionally biased toward basic and acidic residues. The tract at residues 33 to 41 (DAVLSSEPT) is N0 binding. The tract at residues 54–317 (INTLQRPGST…SPETDATKKG (264 aa)) is disordered. Composition is skewed to basic and acidic residues over residues 99-110 (AEAHARNVDKQN), 150-168 (GAEDENREMAANPDKRGED), and 175-193 (EEIRRSAPLPDEREGRADN). Phosphoserine; by host is present on residues serine 249, serine 257, and serine 260. The interval 344 to 411 (FESSRDASYV…SFRDIYKRFS (68 aa)) is multimerization. The stretch at 364–429 (YAEMAFNVCG…LLMSNLSTLH (66 aa)) forms a coiled coil. The interval 412-445 (EYQKEQNSLLMSNLSTLHIITDRGGKTDNPDSPT) is l protein binding. Residues 433–462 (DRGGKTDNPDSPTRSPSVFAKTKENKTKAT) form a disordered region. Residues serine 447 and serine 449 each carry the phosphoserine; by host modification. Residues 453–462 (KTKENKTKAT) are compositionally biased toward basic and acidic residues. Positions 479–568 (DLLREDEFRE…VEEDIESLTN (90 aa)) are interaction with the nucleocapsid (N-RNA).

It belongs to the respirovirus P protein family. As to quaternary structure, homotetramer. Interacts (via multimerization domain) with polymerase L; this interaction forms the polymerase complex. Interacts (via N-terminus) with N0; this interaction allows P to chaperon N0 before encapsidation and form the N-P complex. Interacts (via C-terminus) with N-RNA template; this interaction positions the polymerase on the template. Phosphorylated by PKC/PRKCZ, and other unknown kinases. Phosphorylation is necessary for viral transcription and replication. The N-terminus contains the majority of phosphorylated sites. Ser-249 is the major site of phosphorylation, but is not necessary for most functions.

It localises to the host cytoplasm. In terms of biological role, essential cofactor of the RNA polymerase L that plays a central role in the transcription and replication by forming the polymerase complex with RNA polymerase L and recruiting L to the genomic N-RNA template for RNA synthesis. Also plays a central role in the encapsidation of nascent RNA chains by forming the encapsidation complex with the nucleocapsid protein N (N-P complex). Acts as a chaperone for newly synthesized free N protein, so-called N0, allowing encapsidation of nascent RNA chains during replication. The nucleoprotein protein N prevents excessive phosphorylation of P, which leads to down-regulation of viral transcription/ replication. Participates, together with N, in the formation of viral factories (viroplasms), which are large inclusions in the host cytoplasm where replication takes place. Recruits host PI4KB and remodel the host endoplasmic reticulum membrane to form viral replication factories. The sequence is that of Phosphoprotein (P/V/C) from Sendai virus (strain Ohita) (SeV).